The following is a 318-amino-acid chain: Aspartate carbamoyltransferase catalytic subunit (318 aa).

Carbamoyl phosphate is bound by residues arginine 54 and threonine 55. Lysine 82 contributes to the L-aspartate binding site. Carbamoyl phosphate-binding residues include arginine 104, histidine 134, and glutamine 137. Residues arginine 174 and arginine 230 each coordinate L-aspartate. Carbamoyl phosphate is bound by residues glycine 271 and proline 272.

The protein belongs to the aspartate/ornithine carbamoyltransferase superfamily. ATCase family. Heterododecamer (2C3:3R2) of six catalytic PyrB chains organized as two trimers (C3), and six regulatory PyrI chains organized as three dimers (R2).

It carries out the reaction carbamoyl phosphate + L-aspartate = N-carbamoyl-L-aspartate + phosphate + H(+). It functions in the pathway pyrimidine metabolism; UMP biosynthesis via de novo pathway; (S)-dihydroorotate from bicarbonate: step 2/3. Functionally, catalyzes the condensation of carbamoyl phosphate and aspartate to form carbamoyl aspartate and inorganic phosphate, the committed step in the de novo pyrimidine nucleotide biosynthesis pathway. This Clavibacter sepedonicus (Clavibacter michiganensis subsp. sepedonicus) protein is Aspartate carbamoyltransferase catalytic subunit.